A 151-amino-acid polypeptide reads, in one-letter code: MKINIYAILKPTADNFDQIIKEFIKMSSKYAKVEVHYIFNKNIAKAQTIGEKESQLAYSQTYEPLLKGYNIALDVLGKRVDTYAFSSLIDNKNEVNFFIGGAYGFQREFLNKCDSVISLSDLTMAHKVANVVLTEQIFRSLCIQNNHPYHK.

S-adenosyl-L-methionine is bound by residues L73, G100, and 119–124; that span reads LSDLTM.

Belongs to the RNA methyltransferase RlmH family. Homodimer.

The protein localises to the cytoplasm. The catalysed reaction is pseudouridine(1915) in 23S rRNA + S-adenosyl-L-methionine = N(3)-methylpseudouridine(1915) in 23S rRNA + S-adenosyl-L-homocysteine + H(+). In terms of biological role, specifically methylates the pseudouridine at position 1915 (m3Psi1915) in 23S rRNA. The polypeptide is Ribosomal RNA large subunit methyltransferase H (Aliarcobacter butzleri (strain RM4018) (Arcobacter butzleri)).